A 112-amino-acid polypeptide reads, in one-letter code: ATP-dependent Clp protease adapter protein ClpS (112 aa).

It belongs to the ClpS family. Binds to the N-terminal domain of the chaperone ClpA.

Its function is as follows. Involved in the modulation of the specificity of the ClpAP-mediated ATP-dependent protein degradation. The chain is ATP-dependent Clp protease adapter protein ClpS from Rhodococcus opacus (strain B4).